We begin with the raw amino-acid sequence, 204 residues long: Thymidine kinase (204 aa).

ATP-binding positions include 23 to 30 (GSMFSGKT) and 95 to 98 (DEAQ). Residue Glu96 is the Proton acceptor of the active site. Residues Cys152, Cys155, Cys184, and Cys187 each coordinate Zn(2+).

It belongs to the thymidine kinase family. As to quaternary structure, homotetramer.

It is found in the cytoplasm. It carries out the reaction thymidine + ATP = dTMP + ADP + H(+). This chain is Thymidine kinase, found in Porphyromonas gingivalis (strain ATCC BAA-308 / W83).